The sequence spans 325 residues: Golgi to ER traffic protein 4 homolog A (325 aa).

2 disordered regions span residues 1 to 22 (MAAA…GGVQ) and 306 to 325 (SGED…IELD). Over residues 307 to 317 (GEDDDVEDGQE) the composition is skewed to acidic residues.

The protein belongs to the GET4 family. In terms of assembly, component of the bag6/bat3 complex.

Its subcellular location is the cytoplasm. The protein localises to the cytosol. As part of a cytosolic protein quality control complex, the bag6/bat3 complex, maintains misfolded and hydrophobic patches-containing proteins in a soluble state and participates in their proper delivery to the endoplasmic reticulum or alternatively can promote their sorting to the proteasome where they undergo degradation. The bag6/bat3 complex is involved in the post-translational delivery of tail-anchored/type II transmembrane proteins to the endoplasmic reticulum membrane. Similarly, the bag6/bat3 complex also functions as a sorting platform for proteins of the secretory pathway that are mislocalized to the cytosol either delivering them to the proteasome for degradation or to the endoplasmic reticulum. The bag6/bat3 complex also plays a role in the endoplasmic reticulum-associated degradation (ERAD), a quality control mechanism that eliminates unwanted proteins of the endoplasmic reticulum through their retrotranslocation to the cytosol and their targeting to the proteasome. It maintains these retrotranslocated proteins in an unfolded yet soluble state condition in the cytosol to ensure their proper delivery to the proteasome. This is Golgi to ER traffic protein 4 homolog A (get4-a) from Xenopus laevis (African clawed frog).